Reading from the N-terminus, the 494-residue chain is MKKQAFSSEQYLNLQRDHILERINQFDGKLYLEFGGKMLEDFHAARVLPGYEPDNKIKLLQELKEQVEVVIAINASNIEHSKARGDLGISYDQEVLRLIDKFNELGIFVGSVVITQYAGQPAADAFRNQLEKNGIDSYLHYPIKGYPTDMDHIISPEGMGKNDYIKTSRNLIVVTAPGPGSGKLATCMSNMYHDQINGIKSGYAKFETFPVWNLPLHHPVNLAYEAATADLDDVNMIDPFHLQTYGETTVNYNRDIEIFPVLKRMLERILGKSPYASPTDMGVNMVGFAITDDEAAVEASKQEIIRRYYQTVLDFKAEKVGEAAVKKIELLMNDLGITPADRKVAVVARQKAEETGGPALALELPNGDIVTGKNSELFGPTAAALINAIKKSADIAKEVKLIEPEVVKPIQGLKIDHLGSRNPRLHSNEILIALAITATENPDAARAMEELGNLKGSEAHSTIILTDEDKNVLRKLGINVTFDPYYQYDRLYRK.

The protein belongs to the UPF0371 family.

This is UPF0371 protein SPG_0310 from Streptococcus pneumoniae serotype 19F (strain G54).